Reading from the N-terminus, the 502-residue chain is 2,3-bisphosphoglycerate-independent phosphoglycerate mutase (502 aa).

2 residues coordinate Mn(2+): aspartate 12 and serine 62. Catalysis depends on serine 62, which acts as the Phosphoserine intermediate. Substrate contacts are provided by residues histidine 123, 152–153 (RD), arginine 183, arginine 189, 255–258 (RPDR), and lysine 329. Mn(2+)-binding residues include aspartate 394, histidine 398, aspartate 435, histidine 436, and histidine 453.

Belongs to the BPG-independent phosphoglycerate mutase family. In terms of assembly, monomer. Requires Mn(2+) as cofactor.

It catalyses the reaction (2R)-2-phosphoglycerate = (2R)-3-phosphoglycerate. It participates in carbohydrate degradation; glycolysis; pyruvate from D-glyceraldehyde 3-phosphate: step 3/5. Functionally, catalyzes the interconversion of 2-phosphoglycerate and 3-phosphoglycerate. This is 2,3-bisphosphoglycerate-independent phosphoglycerate mutase from Malacoplasma penetrans (strain HF-2) (Mycoplasma penetrans).